We begin with the raw amino-acid sequence, 390 residues long: 1-deoxy-D-xylulose 5-phosphate reductoisomerase (390 aa).

Residues Thr-10, Gly-11, Ser-12, Val-13, Gly-38, Asn-40, and Asn-123 each contribute to the NADPH site. Lys-124 is a binding site for 1-deoxy-D-xylulose 5-phosphate. Residue Glu-125 participates in NADPH binding. Asp-149 lines the Mn(2+) pocket. Residues Ser-150, Glu-151, Ser-175, and His-198 each contribute to the 1-deoxy-D-xylulose 5-phosphate site. Position 151 (Glu-151) interacts with Mn(2+). Gly-204 is an NADPH binding site. 4 residues coordinate 1-deoxy-D-xylulose 5-phosphate: Ser-211, Asn-216, Lys-217, and Glu-220. Glu-220 serves as a coordination point for Mn(2+).

Belongs to the DXR family. It depends on Mg(2+) as a cofactor. Mn(2+) serves as cofactor.

The catalysed reaction is 2-C-methyl-D-erythritol 4-phosphate + NADP(+) = 1-deoxy-D-xylulose 5-phosphate + NADPH + H(+). It functions in the pathway isoprenoid biosynthesis; isopentenyl diphosphate biosynthesis via DXP pathway; isopentenyl diphosphate from 1-deoxy-D-xylulose 5-phosphate: step 1/6. In terms of biological role, catalyzes the NADPH-dependent rearrangement and reduction of 1-deoxy-D-xylulose-5-phosphate (DXP) to 2-C-methyl-D-erythritol 4-phosphate (MEP). This chain is 1-deoxy-D-xylulose 5-phosphate reductoisomerase, found in Paracoccus denitrificans (strain Pd 1222).